The following is a 393-amino-acid chain: Pyrin and HIN domain-containing protein 1-like (393 aa).

Residues 1–87 (MVNEYKRIVL…ANKLKNEKAK (87 aa)) enclose the Pyrin domain. The interval 82–188 (KNEKAKAKRK…TPTRSSSRIL (107 aa)) is disordered. The span at 87–102 (KAKRKGKGKRKTAAKR) shows a compositional bias: basic residues. 2 stretches are compositionally biased toward polar residues: residues 108 to 118 (PSTSQPMSTTN) and 126 to 151 (GRSTPDTQVAQLSLPTASRRNQAIQI). Positions 152 to 169 (SPTIASSSGQTSSRSSET) are enriched in low complexity. Over residues 170-186 (LQSIIQSPETPTRSSSR) the composition is skewed to polar residues. The region spanning 219 to 393 (NVPKEPSEEN…NPGDKLRLML (175 aa)) is the HIN-200 domain.

It belongs to the HIN-200 family.

The protein localises to the nucleus. This Mus musculus (Mouse) protein is Pyrin and HIN domain-containing protein 1-like.